The primary structure comprises 158 residues: Small ribosomal subunit protein uS7 (158 aa).

It belongs to the universal ribosomal protein uS7 family. As to quaternary structure, part of the 30S ribosomal subunit. Contacts proteins S9 and S11.

In terms of biological role, one of the primary rRNA binding proteins, it binds directly to 16S rRNA where it nucleates assembly of the head domain of the 30S subunit. Is located at the subunit interface close to the decoding center, probably blocks exit of the E-site tRNA. This is Small ribosomal subunit protein uS7 from Granulibacter bethesdensis (strain ATCC BAA-1260 / CGDNIH1).